Consider the following 926-residue polypeptide: Chitin synthase-like protein 2 (926 aa).

A disordered region spans residues 1–56 (MSFQNPSYINAKHRSFLQPKDTQDSQDLRNWVSHSSVDEETAYSSSTLSSSSSKSF). Positions 44-55 (SSSTLSSSSSKS) are enriched in low complexity. 7 helical membrane-spanning segments follow: residues 564 to 584 (INSS…LWTT), 599 to 619 (LVFA…FLAF), 641 to 661 (LFLV…MLAM), 671 to 691 (LLFI…FCVF), 721 to 741 (LLIL…FFIF), 853 to 873 (VLVW…VFDG), and 885 to 905 (IFWS…TFIA).

It belongs to the chitin synthase family.

It is found in the membrane. In terms of biological role, plays a role in septum formation. Has no chitin synthase activity. In Schizosaccharomyces pombe (strain 972 / ATCC 24843) (Fission yeast), this protein is Chitin synthase-like protein 2 (chs2).